The following is a 737-amino-acid chain: Oligopeptide transporter 3 (737 aa).

Transmembrane regions (helical) follow at residues 45–65 (AWFL…FFTY), 69–89 (PLTI…KFMA), 117–137 (VIIT…AYSI), 153–173 (FICG…WAGI), 215–235 (FLVA…LFPI), 255–275 (VGSG…AGIS), 289–309 (ILNV…VCYW), 357–377 (LYLS…FTAT), 418–438 (WWFY…SFVW), 446–466 (WWGM…IGVI), 478–498 (IIGQ…NLIF), 532–552 (AQLV…WWML), 604–624 (VWLF…SKIF), 629–649 (WIPL…PPAT), 650–670 (PTNI…VFNY), and 681–701 (VLSA…FFAL).

The protein belongs to the oligopeptide OPT transporter (TC 2.A.67.1) family. In terms of tissue distribution, strong expression in flowers, leaves and roots. Preferentially expressed in the vascular tissues of seedlings and mature plants as well as in pollen and developing embryos.

Its subcellular location is the membrane. Its function is as follows. May be involved in the translocation of tetra- and pentapeptides across the cellular membrane in an energy-dependent manner. Also acts as a metal transporter that could be a component of the copper transport machinery. Essential for early embryo development. The protein is Oligopeptide transporter 3 (OPT3) of Arabidopsis thaliana (Mouse-ear cress).